The sequence spans 344 residues: Trace amine-associated receptor 8c (344 aa).

The Extracellular portion of the chain corresponds to 1-36; it reads MTSNFSQATLQLCYENVNASCIKTPYSPGLRVLLYM. Residues Asn-4 and Asn-18 are each glycosylated (N-linked (GlcNAc...) asparagine). Disulfide bonds link Cys-21/Cys-185 and Cys-96/Cys-189. Residues 37–57 form a helical membrane-spanning segment; that stretch reads VFGFGAVLAVCGNLLVVISVL. Topologically, residues 58–67 are cytoplasmic; it reads HFKQLHSPAN. Residues 68 to 88 traverse the membrane as a helical segment; it reads FLIASLASADFLVGISVMPFS. At 89–102 the chain is on the extracellular side; it reads MVRSIESCWYFGDT. Residues 103–127 form a helical membrane-spanning segment; the sequence is FCSLHSCCDVAFCYSSALHLCFISV. Topologically, residues 128-146 are cytoplasmic; sequence DRYIAVTDPLVYPTKFTVS. Residues 147–167 traverse the membrane as a helical segment; sequence VSGICISISWILPLVYSSAVF. Over 168–196 the chain is Extracellular; the sequence is YTGISAMGIENLVSALNCVGGCQVVVNQD. A helical membrane pass occupies residues 197–217; the sequence is WVLISFLLFFIPTLVMIILYS. The Cytoplasmic segment spans residues 218-260; it reads KIFLVAKQQAVKIETSVSGSKGESSLESHKARVAKRERKAAKT. Residues 261-281 form a helical membrane-spanning segment; it reads LGVTVLAFIVSWLPYTIDTLI. Residues 282–295 lie on the Extracellular side of the membrane; it reads DAFMGFITPAYVYE. The helical transmembrane segment at 296-319 threads the bilayer; it reads FCCWSAYYNSAMNPLIYAFFYPWF. At 320 to 344 the chain is on the cytoplasmic side; the sequence is RKAMKLILSGKILKGHSSTTSLFSE.

It belongs to the G-protein coupled receptor 1 family.

The protein localises to the cell membrane. Its function is as follows. Olfactory receptor activated by trace amines, such as N-methylpiperidine and N,N-dimethylcyclohexylamine. Trace amine compounds are enriched in animal body fluids and act on trace amine-associated receptors (TAARs) to elicit both intraspecific and interspecific innate behaviors. Ligand-binding causes a conformation change that triggers signaling via G(s)-class of G alpha proteins (GNAL or GNAS). The polypeptide is Trace amine-associated receptor 8c (Rattus norvegicus (Rat)).